Reading from the N-terminus, the 118-residue chain is Mitochondrial zinc maintenance protein 1, mitochondrial (118 aa).

The disordered stretch occupies residues 70–118 (QGQKHNPDEEKYQLNLHKDSEMGDNESIKSPPPMPTKGKKGKKVKCCSE). The segment covering 74 to 90 (HNPDEEKYQLNLHKDSE) has biased composition (basic and acidic residues). A compositionally biased stretch (basic residues) spans 106–118 (KGKKGKKVKCCSE).

Belongs to the complex I LYR family. MZM1 subfamily. In terms of assembly, interacts with RIP1.

It localises to the mitochondrion matrix. Functionally, assembly factor required for Rieske Fe-S protein RIP1 incorporation into the cytochrome b-c1 (CIII) complex. Functions as a chaperone, binding to this subunit within the mitochondrial matrix and stabilizing it prior to its translocation and insertion into the late CIII dimeric intermediate within the mitochondrial inner membrane. Modulates the mitochondrial matrix zinc pool. The polypeptide is Mitochondrial zinc maintenance protein 1, mitochondrial (MZM1) (Yarrowia lipolytica (strain CLIB 122 / E 150) (Yeast)).